The following is a 156-amino-acid chain: Endoribonuclease YbeY (156 aa).

Zn(2+) is bound by residues His-119, His-123, and His-129.

Belongs to the endoribonuclease YbeY family. Requires Zn(2+) as cofactor.

It localises to the cytoplasm. Its function is as follows. Single strand-specific metallo-endoribonuclease involved in late-stage 70S ribosome quality control and in maturation of the 3' terminus of the 16S rRNA. The chain is Endoribonuclease YbeY from Buchnera aphidicola subsp. Cinara cedri (strain Cc).